An 832-amino-acid chain; its full sequence is Histone acetyltransferase KAT2B (832 aa).

Positions 1–22 (MSEAGGAGPGGCGAGAGAGAGP) are enriched in gly residues. Disordered regions lie at residues 1-54 (MSEA…ACGP) and 395-436 (SYNS…DSHV). Over residues 24–39 (ALPPQPAALPPAPPQG) the composition is skewed to pro residues. The span at 40–54 (SPCAAAAGGSGACGP) shows a compositional bias: low complexity. The span at 395-413 (SYNSTSSSLEQPNAGSSSP) shows a compositional bias: polar residues. Over residues 425–436 (PGEKRKMTDSHV) the composition is skewed to basic and acidic residues. One can recognise an N-acetyltransferase domain in the interval 503-651 (LNQKPNKKIL…GATLMGCELN (149 aa)). Glu570 acts as the Proton donor/acceptor in catalysis. Acetyl-CoA is bound by residues 574–576 (CAV), 581–587 (QVKGYGT), and 612–615 (YAIG). The disordered stretch occupies residues 706–725 (IRETGWKPSGKEKSKEPRDP). Residues 714–725 (SGKEKSKEPRDP) show a composition bias toward basic and acidic residues. Residues 723-827 (RDPDQLYSTL…KFFFSKIKEA (105 aa)) enclose the Bromo domain.

This sequence belongs to the acetyltransferase family. GCN5 subfamily. In terms of assembly, interacts with SIRT1. Interacts (unsumoylated form) with NR2C1; the interaction promotes transactivation activity. Interacts with EP300, CREBBP and DDX17. Interacts with NCOA1 and NCOA3. Component of a large chromatin remodeling complex, at least composed of MYSM1, KAT2B/PCAF, RBM10 and KIF11/TRIP5. Interacts with NR2C2 (hypophosphorylated and unsumoylated form); the interaction promotes the transactivation activity of NR2C2. Interacts with KLF1; the interaction does not acetylate KLF1 and there is no enhancement of its transactivational activity. Interacts with NFE4. Interacts with MECOM. Interacts with E2F1; the interaction acetylates E2F1 augmenting its DNA-binding and transcriptional activity. Interacts with NPAS2, BMAL1 and CLOCK. Interacts with BCAS3. Interacts with CEBPB. Interacts with NR4A3. Interacts with NFATC2. Interacts with TBX5. Interacts with PLK4. Interacts with RB1; this interaction leads to RB1 acetylation. Interacts with VRK1. As to quaternary structure, (Microbial infection) Interacts with and acetylates HIV-1 Tat. (Microbial infection) Interacts with HTLV-1 Tax. As to expression, ubiquitously expressed but most abundant in heart and skeletal muscle. Also expressed in the skin, in keratinocytes (at protein level).

The protein localises to the nucleus. Its subcellular location is the cytoplasm. It localises to the cytoskeleton. It is found in the microtubule organizing center. The protein resides in the centrosome. It catalyses the reaction L-lysyl-[histone] + acetyl-CoA = N(6)-acetyl-L-lysyl-[histone] + CoA + H(+). It carries out the reaction L-lysyl-[protein] + acetyl-CoA = N(6)-acetyl-L-lysyl-[protein] + CoA + H(+). The catalysed reaction is spermidine + acetyl-CoA = N(8)-acetylspermidine + CoA + H(+). Its activity is regulated as follows. Activated in vitro by very low concentrations of spermidine, but inhibited at spermidine concentrations higher than 4 uM. The activating effect of low spermidine concentrations may be mediated by N(8)-acetylspermidine produced by KAT2B/P/CAF itself acting as a positive feedback loop. Functions as a histone acetyltransferase (HAT) to promote transcriptional activation. Has significant histone acetyltransferase activity with core histones (H3 and H4), and also with nucleosome core particles. Has a a strong preference for acetylation of H3 at 'Lys-9' (H3K9ac). Also acetylates non-histone proteins, such as ACLY, MAPRE1/EB1, PLK4, RRP9/U3-55K and TBX5. Inhibits cell-cycle progression and counteracts the mitogenic activity of the adenoviral oncoprotein E1A. Acts as a circadian transcriptional coactivator which enhances the activity of the circadian transcriptional activators: NPAS2-BMAL1 and CLOCK-BMAL1 heterodimers. Involved in heart and limb development by mediating acetylation of TBX5, acetylation regulating nucleocytoplasmic shuttling of TBX5. Acts as a negative regulator of centrosome amplification by mediating acetylation of PLK4. Acetylates RRP9/U3-55K, a core subunit of the U3 snoRNP complex, impairing pre-rRNA processing. Acetylates MAPRE1/EB1, promoting dynamic kinetochore-microtubule interactions in early mitosis. Also acetylates spermidine. In terms of biological role, (Microbial infection) In case of HIV-1 infection, it is recruited by the viral protein Tat. Regulates Tat's transactivating activity and may help inducing chromatin remodeling of proviral genes. This Homo sapiens (Human) protein is Histone acetyltransferase KAT2B.